The primary structure comprises 82 residues: Alpha-defensin 17 (82 aa).

The first 8 residues, 1-8, serve as a signal peptide directing secretion; it reads LLAFQVQA. Residues 1 to 43 form a disordered region; that stretch reads LLAFQVQADPIQNTDEETKTEEQPGEEDQAVSVSFGDPEGTSL. Positions 9 to 47 are excised as a propeptide; it reads DPIQNTDEETKTEEQPGEEDQAVSVSFGDPEGTSLQEES. 3 disulfides stabilise this stretch: cysteine 53–cysteine 81, cysteine 55–cysteine 70, and cysteine 60–cysteine 80.

It belongs to the alpha-defensin family.

The protein localises to the secreted. Its function is as follows. Probably contributes to the antimicrobial barrier function of the small bowel mucosa. The chain is Alpha-defensin 17 (Defa17) from Mus musculus (Mouse).